Consider the following 279-residue polypeptide: Tryptophan synthase alpha chain (279 aa).

Active-site proton acceptor residues include E50 and D61.

Belongs to the TrpA family. Tetramer of two alpha and two beta chains.

The enzyme catalyses (1S,2R)-1-C-(indol-3-yl)glycerol 3-phosphate + L-serine = D-glyceraldehyde 3-phosphate + L-tryptophan + H2O. The protein operates within amino-acid biosynthesis; L-tryptophan biosynthesis; L-tryptophan from chorismate: step 5/5. Its function is as follows. The alpha subunit is responsible for the aldol cleavage of indoleglycerol phosphate to indole and glyceraldehyde 3-phosphate. The chain is Tryptophan synthase alpha chain from Brucella abortus (strain S19).